The chain runs to 400 residues: tRNA(Ile)-lysidine synthase (400 aa).

Residue 25–30 (SGGVDS) coordinates ATP.

It belongs to the tRNA(Ile)-lysidine synthase family.

Its subcellular location is the cytoplasm. The catalysed reaction is cytidine(34) in tRNA(Ile2) + L-lysine + ATP = lysidine(34) in tRNA(Ile2) + AMP + diphosphate + H(+). In terms of biological role, ligates lysine onto the cytidine present at position 34 of the AUA codon-specific tRNA(Ile) that contains the anticodon CAU, in an ATP-dependent manner. Cytidine is converted to lysidine, thus changing the amino acid specificity of the tRNA from methionine to isoleucine. In Francisella philomiragia subsp. philomiragia (strain ATCC 25017 / CCUG 19701 / FSC 153 / O#319-036), this protein is tRNA(Ile)-lysidine synthase.